The chain runs to 323 residues: MKKRIFIGSSSEQLTILNEIVDLLGDDVECIPWTDAFALNKSGLDSLIKQTRLADYSILIATKDDLTKQRGESLTKPRDNVVFEFGLFLGAAGPEKCYLIAEEDTDLPTDLDGITVAKFTRNSGQYNSLDKIVESIRTHLVKIAEMSQLGLLPSTALAIGYYNSFIKRVCEEIHGSECVELEGKKIKVKSFRVDVVIPETLDDNGVGNFTTLYNKRYGLSKATTCTNPALLGTRGFPFHFKVDPPDANQESPVDIHLLDIPSTLSTIVESLKLYLPSNQVGQDFDMDYLEMRELENFAKVLKYLIGRNAATKGYVNVLTNVKL.

Residues 4–120 (RIFIGSSSEQ…LDGITVAKFT (117 aa)) form the TIR domain. Glutamate 84 is a catalytic residue. Residues 154–323 (STALAIGYYN…YVNVLTNVKL (170 aa)) form an STING domain region. Residues serine 164, phenylalanine 165, arginine 234, proline 237, aspartate 259, serine 262, and threonine 263 each coordinate 3',3'-c-di-GMP.

It in the C-terminal section; belongs to the bacterial STING family. In terms of assembly, forms homodimers which subsequently form filaments. In vitro in the presence of c-di-GMP forms filaments up to 300 nm in length with an ordered array of parallel-stacked subunits, where the TIR domains form one face of the filament and the STING domains form the other face. Antiparallel double-filament structures are also seen. 3'3'-cGAMP weakly induces filament formation, while 2'3'-cGAMP does not.

It catalyses the reaction NAD(+) + H2O = ADP-D-ribose + nicotinamide + H(+). With respect to regulation, NAD(+) hydrolase activity is strongly stimulated by c-di-GMP, weakly by 3'3'-cGAMP, very weakly by c-di-AMP and not at all by 2'3'-cGAMP. Self-association of TIR domains is required for NADase activity. In terms of biological role, effector protein of a CBASS antiviral system with NAD(+) hydrolase activity. CBASS (cyclic oligonucleotide-based antiphage signaling system) provides immunity against bacteriophage. The CD-NTase protein synthesizes cyclic nucleotides in response to infection; these serve as specific second messenger signals. The signals activate a diverse range of effectors, leading to bacterial cell death and thus abortive phage infection. A type I-D(GG) CBASS system. Its function is as follows. Upon activation by 3'3'-c-di-GMP forms filaments which hydrolyze NAD(+); filament formation is required for enzyme activation. Induction in an E.coli strain that synthesizes c-di-GMP leads to significant growth inhibition. Binds c-di-GMP and 3'3'-cGAMP (3'3'-cyclic GMP-AMP), but not c-di-AMP, 2'3'-cGAMP or cUMP-AMP. This Sphingobacterium faecium (strain DSM 11690 / JCM 21820 / NBRC 15299 / NCIMB 13408 / KS 0470) protein is CD-NTase-associated protein 12.